The chain runs to 1507 residues: DDB1- and CUL4-associated factor 1 (1507 aa).

A protein kinase-like region spans residues 141 to 500 (QPLRTYSTGL…STLEILNLED (360 aa)). Ser-202 and Ser-255 each carry phosphoserine. Residues 242–288 (HLDSGHKTSSRVNSTTKPEDGGLKKNKSAKQGDRENFRKAKQKLGFS) form a disordered region. Residues 562–593 (SYTHEQIVEMMEFLIEYGPAQLYWEPAEVFLK) form the Chromo domain. Lys-701 is modified (N6-acetyllysine). Ser-828 carries the phosphoserine modification. The LisH domain maps to 846–878 (PEKELLLLIRNHLISKGLGETATVLTKEADLPM). Thr-888 carries the post-translational modification Phosphothreonine. Ser-895 and Ser-898 each carry phosphoserine. Residues 917 to 947 (AAVGASAPSAPTAHPQPRPPQGPLALPGPSY) are disordered. A phosphoserine mark is found at Ser-979 and Ser-1000. WD repeat units lie at residues 1091-1130 (EDES…EEAS), 1133-1174 (CHNS…DMKH), 1176-1213 (FTED…KLLT), 1215-1247 (FNPD…WDVR), and 1248-1290 (SAQA…LLHT). The tract at residues 1091–1290 (EDESGFTCCA…DLRTFHLLHT (200 aa)) is WD repeat-like region. 2 short sequence motifs (DWD box) span residues 1242–1249 (VLWDVRSA) and 1278–1285 (EIWDLRTF). Ser-1328 is subject to Phosphoserine. The interval 1393-1507 (RLAEDEDEEE…EDDIILSLNE (115 aa)) is disordered. Composition is skewed to acidic residues over residues 1396-1483 (EDED…EEVE) and 1490-1501 (DSSDNSDLEDDI). The tract at residues 1418-1507 (DDDTDDLDEL…EDDIILSLNE (90 aa)) is interaction with NF2.

Belongs to the VPRBP/DCAF1 family. Component of the DCX (DDB1-CUL4-X-box) E3 ubiquitin-protein ligase complex, named CUL4A-RBX1-DDB1-DCAF1/VPRBP complex. Interacts with DDB1; the interaction is direct. Also forms a ternary complex with DDA1 and DDB1. Interacts with NF2 (via FERM domain). Component of the EDVP complex, a E3 ligase complex containing DYRK2, EDD/UBR5, DDB1 and DCAF1. Interacts with DYRK2; the interaction is direct. Interacts with RAG1; the interaction is direct. Interacts with LLGL1 and LLGL2. Interacts with histone H3. Interacts with ESR1 and LATS1; probably recruited by LATS1 to promote ESR1 ubiquitination and ubiquitin-mediated proteasomal degradation. Directly interacts with TET1, TET2 and TET3 (via C-terminus). Interacts with CEP78; promoting DCAF1 localization to centrosomes. As to quaternary structure, (Microbial infection) Interacts with HIV-1 virus Vpr protein; the interaction is direct. In terms of assembly, (Microbial infection) Interacts with HIV-2 virus Vpx protein; the interaction is direct and the complex recruits SAMHD1 to promote its ubiquitin-dependent proteasomal degradation. (Microbial infection) Interacts (via C-terminus) with human cytomegalovirus protein UL35; this interaction induces the accumulation of cells in the G2 phase of the cell cycle. Ubiquitously expressed.

Its subcellular location is the cytoplasm. The protein resides in the nucleus. It is found in the cytoskeleton. The protein localises to the microtubule organizing center. It localises to the centrosome. It carries out the reaction L-seryl-[protein] + ATP = O-phospho-L-seryl-[protein] + ADP + H(+). The catalysed reaction is L-threonyl-[protein] + ATP = O-phospho-L-threonyl-[protein] + ADP + H(+). The protein operates within protein modification; protein ubiquitination. In terms of biological role, acts both as a substrate recognition component of E3 ubiquitin-protein ligase complexes and as an atypical serine/threonine-protein kinase, playing key roles in various processes such as cell cycle, telomerase regulation and histone modification. Probable substrate-specific adapter of a DCX (DDB1-CUL4-X-box) E3 ubiquitin-protein ligase complex, named CUL4A-RBX1-DDB1-DCAF1/VPRBP complex, which mediates ubiquitination and proteasome-dependent degradation of proteins such as NF2. Involved in the turnover of methylated proteins: recognizes and binds methylated proteins via its chromo domain, leading to ubiquitination of target proteins by the RBX1-DDB1-DCAF1/VPRBP complex. The CUL4A-RBX1-DDB1-DCAF1/VPRBP complex is also involved in B-cell development: DCAF1 is recruited by RAG1 to ubiquitinate proteins, leading to limit error-prone repair during V(D)J recombination. Also part of the EDVP complex, an E3 ligase complex that mediates ubiquitination of proteins such as TERT, leading to TERT degradation and telomerase inhibition. The EDVP complex also mediates ubiquitination and degradation of CCP110. Also acts as an atypical serine/threonine-protein kinase that specifically mediates phosphorylation of 'Thr-120' of histone H2A (H2AT120ph) in a nucleosomal context, thereby repressing transcription. H2AT120ph is present in the regulatory region of many tumor suppresor genes, down-regulates their transcription and is present at high level in a number of tumors. Involved in JNK-mediated apoptosis during cell competition process via its interaction with LLGL1 and LLGL2. By acting on TET dioxygenses, essential for oocyte maintenance at the primordial follicle stage, hence essential for female fertility. Its function is as follows. (Microbial infection) In case of infection by HIV-1 virus, it is recruited by HIV-1 Vpr in order to hijack the CUL4A-RBX1-DDB1-DCAF1/VPRBP function leading to arrest the cell cycle in G2 phase, and also to protect the viral protein from proteasomal degradation by another E3 ubiquitin ligase. The HIV-1 Vpr protein hijacks the CUL4A-RBX1-DDB1-DCAF1/VPRBP complex to promote ubiquitination and degradation of proteins such as TERT and ZIP/ZGPAT. Functionally, (Microbial infection) In case of infection by HIV-2 virus, it is recruited by HIV-2 Vpx in order to hijack the CUL4A-RBX1-DDB1-DCAF1/VPRBP function leading to enhanced efficiency of macrophage infection and promotion of the replication of cognate primate lentiviruses in cells of monocyte/macrophage lineage. The polypeptide is DDB1- and CUL4-associated factor 1 (Homo sapiens (Human)).